Reading from the N-terminus, the 185-residue chain is Lipid A acyltransferase PagP (185 aa).

Positions 1–14 are cleaved as a signal peptide; it reads MKLKPVLYLLMLLG. The N-palmitoyl cysteine moiety is linked to residue Cys-15. Residue Cys-15 is the site of S-diacylglycerol cysteine attachment. Active-site residues include His-57, Asp-100, and Ser-101.

The protein belongs to the lipid A palmitoyltransferase family. Homodimer.

It localises to the cell outer membrane. The catalysed reaction is a lipid A + a 1,2-diacyl-sn-glycero-3-phosphocholine = a hepta-acyl lipid A + a 2-acyl-sn-glycero-3-phosphocholine. The enzyme catalyses a lipid IVA + a 1,2-diacyl-sn-glycero-3-phosphocholine = a lipid IVB + a 2-acyl-sn-glycero-3-phosphocholine. It catalyses the reaction a lipid IIA + a 1,2-diacyl-sn-glycero-3-phosphocholine = a lipid IIB + a 2-acyl-sn-glycero-3-phosphocholine. Its function is as follows. Transfers a fatty acid residue from the sn-1 position of a phospholipid to the N-linked hydroxyfatty acid chain on the proximal unit of lipid A or its precursors. The sequence is that of Lipid A acyltransferase PagP from Erwinia pyrifoliae (strain DSM 12163 / CIP 106111 / Ep16/96).